A 483-amino-acid polypeptide reads, in one-letter code: Proline--tRNA ligase (483 aa).

Belongs to the class-II aminoacyl-tRNA synthetase family. ProS type 3 subfamily. As to quaternary structure, homodimer.

The protein resides in the cytoplasm. The enzyme catalyses tRNA(Pro) + L-proline + ATP = L-prolyl-tRNA(Pro) + AMP + diphosphate. Functionally, catalyzes the attachment of proline to tRNA(Pro) in a two-step reaction: proline is first activated by ATP to form Pro-AMP and then transferred to the acceptor end of tRNA(Pro). In Sulfolobus acidocaldarius (strain ATCC 33909 / DSM 639 / JCM 8929 / NBRC 15157 / NCIMB 11770), this protein is Proline--tRNA ligase.